We begin with the raw amino-acid sequence, 368 residues long: UV excision repair protein rhp23 (368 aa).

The Ubiquitin-like domain maps to 1–77; that stretch reads MNLTFKNLQQ…IVCMVSRPKT (77 aa). 2 stretches are compositionally biased toward low complexity: residues 76–88 and 103–124; these read KTST…AASP and APSS…AAPS. The tract at residues 76–134 is disordered; it reads KTSTSTPKSAASPAPNPPASVPEKKVEAPSSTVAESTSTTQTVAAAAPSNPDTTATSEA. Ser84 and Ser87 each carry phosphoserine. UBA domains follow at residues 135 to 185 and 320 to 360; these read PIDA…LLTG and QEES…LFEH. Ser364 is subject to Phosphoserine.

The protein resides in the nucleus. Its function is as follows. Involved in postreplication repair of UV-damaged DNA. Postreplication repair functions in gap-filling of a daughter strand on replication of damaged DNA. In terms of biological role, protects ubiquitin chains against dissambly by deubiquitinating enzymes thereby promoting protein degradation. This is UV excision repair protein rhp23 (rhp23) from Schizosaccharomyces pombe (strain 972 / ATCC 24843) (Fission yeast).